The following is a 522-amino-acid chain: Coiled-coil domain-containing protein 149-B (522 aa).

2 coiled-coil regions span residues 1–196 (MANQ…LESK) and 260–287 (IRHQ…LEVS). The tract at residues 413-522 (ACTAERSEQH…TSPHQECPSS (110 aa)) is disordered. Polar residues-rich tracts occupy residues 429-438 (GGHQSMSTEA), 467-490 (QPVT…TAEQ), and 503-522 (ASLN…CPSS).

Belongs to the CCDC149 family.

This chain is Coiled-coil domain-containing protein 149-B (ccdc149b), found in Danio rerio (Zebrafish).